A 236-amino-acid chain; its full sequence is CD81 protein (236 aa).

Over 1–12 (MGVEGCTKCIKY) the chain is Cytoplasmic. The helical transmembrane segment at 13–33 (LLFVFNFVFWLAGGVILGVAL) threads the bilayer. Residues 34–63 (WLRHDPQTTNLLYLELGDKPAPNTFYVGIY) lie on the Extracellular side of the membrane. A helical transmembrane segment spans residues 64 to 84 (ILIAVGAVMMFVGFLGCYGAI). The Cytoplasmic segment spans residues 85 to 89 (QESQC). The helical transmembrane segment at 90 to 112 (LLGTFFTCLVILFACEVAAGIWG) threads the bilayer. Residues 113–201 (FVNKDQIAKD…QKIDELFSGK (89 aa)) lie on the Extracellular side of the membrane. 2 cysteine pairs are disulfide-bonded: Cys-156–Cys-190 and Cys-157–Cys-175. A helical membrane pass occupies residues 202 to 224 (LYLIGIAAIVVAVIMIFEMILSM). A cholesterol-binding site is contributed by Glu-219. The Cytoplasmic portion of the chain corresponds to 225–236 (VLCCGIRNSSVY).

Belongs to the tetraspanin (TM4SF) family. In terms of assembly, homodimer. Part of a complex composed of CD19, CR2/CD21, CD81 and IFITM1/CD225 in the membrane of mature B cells. Interacts (via the second extracellular domain) with CD19; this interaction is initiated early during biosynthesis in the ER and enables trafficking of only properly folded CD19. Part of a complex that includes MHC class II/HLA-DR molecules and IFITM1. Interacts with IFITM1. Interacts with IFITM2 and IFITM3. Part of integrin-tetraspanin complex composed of CD9, CD81, beta-1 and beta-2 integrins in the membrane of monocyte/macrophages. Interacts (via the second extracellular domain) with integrin ITGAV:ITGB3. Interacts with CD247/CD3 zeta, ICAM1 and CD9 at the immune synapse on T cell membrane. Part of a GPCR-tetraspanin complex consisting at least of ADGRG1, CD81, possibly CD9, and GNA11 in which CD81 enhances the association of ADGRG1 with GNA11. Part of a complex composed of CD9, CD81, PTGFRN and IGSF8. Interacts directly with IGSF8. Interacts with CD53 and SCIMP. Interacts with SAMHD1 (via its C-terminus). Interacts with glypican GPC3 and with the transcriptional repressor HHEX; binding to GPC3 decreases the availability of free CD81 for binding to HHEX, resulting in nuclear translocation of HHEX and transcriptional repression. Interacts with CLDN1. Interacts with CLDN6 and CLDN9. Not glycosylated. In terms of processing, likely constitutively palmitoylated at low levels. Protein palmitoylation is up-regulated upon coligation of BCR and CD9-C2R-CD81 complexes in lipid rafts.

Its subcellular location is the cell membrane. It is found in the basolateral cell membrane. Structural component of specialized membrane microdomains known as tetraspanin-enriched microdomains (TERMs), which act as platforms for receptor clustering and signaling. Essential for trafficking and compartmentalization of CD19 receptor on the surface of activated B cells. Upon initial encounter with microbial pathogens, enables the assembly of CD19-CR2/CD21 and B cell receptor (BCR) complexes at signaling TERMs, lowering the threshold dose of antigen required to trigger B cell clonal expansion and antibody production. In T cells, facilitates the localization of CD247/CD3 zeta at antigen-induced synapses with B cells, providing for costimulation and polarization toward T helper type 2 phenotype. Present in MHC class II compartments, may also play a role in antigen presentation. Can act both as positive and negative regulator of homotypic or heterotypic cell-cell fusion processes. Positively regulates sperm-egg fusion and may be involved in acrosome reaction. In myoblasts, associates with CD9 and PTGFRN and inhibits myotube fusion during muscle regeneration. In macrophages, associates with CD9 and beta-1 and beta-2 integrins, and prevents macrophage fusion into multinucleated giant cells specialized in ingesting complement-opsonized large particles. Also prevents the fusion of mononuclear cell progenitors into osteoclasts in charge of bone resorption. May regulate the compartmentalization of enzymatic activities. In T cells, defines the subcellular localization of dNTPase SAMHD1 and permits its degradation by the proteasome, thereby controlling intracellular dNTP levels. Also involved in cell adhesion and motility. Positively regulates integrin-mediated adhesion of macrophages, particularly relevant for the inflammatory response in the lung. The sequence is that of CD81 protein (CD81) from Saguinus oedipus (Cotton-top tamarin).